A 102-amino-acid polypeptide reads, in one-letter code: Small ribosomal subunit protein uS10 (102 aa).

Residues 34–59 (QMSGPIPLPTKRLLVPTRKSPDGEGK) form a disordered region.

This sequence belongs to the universal ribosomal protein uS10 family. In terms of assembly, part of the 30S ribosomal subunit.

Functionally, involved in the binding of tRNA to the ribosomes. The protein is Small ribosomal subunit protein uS10 of Methanopyrus kandleri (strain AV19 / DSM 6324 / JCM 9639 / NBRC 100938).